We begin with the raw amino-acid sequence, 115 residues long: Alpha-endosulfine (115 aa).

The segment covering 1–10 (MSSENLSDTQ) has biased composition (polar residues). The segment at 1-27 (MSSENLSDTQMEYEDEKQDSQEKNANL) is disordered. The residue at position 65 (S65) is a Phosphoserine; by GWL. Positions 77–115 (NKQLPVAGPDKNLVTGDHIPTPQDLPQRRSSLVTSKLAG) are disordered. The segment covering 104 to 115 (RRSSLVTSKLAG) has biased composition (polar residues).

It belongs to the endosulfine family. Phosphorylation at Ser-65 by gwl during mitosis is essential for interaction with ppp2r2d (PR55-delta) and subsequent inactivation of PP2A.

It is found in the cytoplasm. Functionally, protein phosphatase inhibitor that specifically inhibits protein phosphatase 2A (PP2A) during mitosis. When phosphorylated at Ser-67 during mitosis, specifically interacts with ppp2r2d (PR55-delta) and inhibits its activity, leading to inactivation of PP2A, an essential condition to keep cyclin-B1-CDK1 activity high during M phase. This Salmo salar (Atlantic salmon) protein is Alpha-endosulfine (ensa).